Reading from the N-terminus, the 71-residue chain is Protein DP71L (71 aa).

Important for host CHOP inhibition regions lie at residues 16–18 and 57–61; these read VRF and LSAVL.

Belongs to the asfivirus DP71L family. As to quaternary structure, interacts (via C-terminus) with host PPP1CB.

Functionally, interacts with the host phosphatase PP1 catalytic subunit (PPP1CB) and recruits it to dephosphorylate EIF2S1/eIF2alpha and therefore restores the host translation that has been shut-down by the host. Also inhibits the EIF2S1/eIF2alpha-ATF4-DDIT3/CHOP pathway. This Ornithodoros (relapsing fever ticks) protein is Protein DP71L.